Here is a 149-residue protein sequence, read N- to C-terminus: Transcriptional repressor NrdR (149 aa).

Residues 3–34 (CPFCSAVDTKVIDSRLVGEGSQVRRRRQCLVC) fold into a zinc finger. One can recognise an ATP-cone domain in the interval 49–139 (PRVIKSNEVR…VYRSFEDIRE (91 aa)).

It belongs to the NrdR family. Zn(2+) serves as cofactor.

In terms of biological role, negatively regulates transcription of bacterial ribonucleotide reductase nrd genes and operons by binding to NrdR-boxes. The sequence is that of Transcriptional repressor NrdR from Pectobacterium atrosepticum (strain SCRI 1043 / ATCC BAA-672) (Erwinia carotovora subsp. atroseptica).